The chain runs to 199 residues: Peroxiredoxin-1 (199 aa).

N-acetylserine is present on Ser2. Residues 6-165 (AKIGYPAPNF…ILRLVQAFQF (160 aa)) form the Thioredoxin domain. N6-acetyllysine; alternate is present on Lys7. Lys7 participates in a covalent cross-link: Glycyl lysine isopeptide (Lys-Gly) (interchain with G-Cter in SUMO2); alternate. N6-acetyllysine is present on Lys16. A Phosphoserine modification is found at Ser32. Cys52 serves as the catalytic Cysteine sulfenic acid (-SOH) intermediate. The residue at position 90 (Thr90) is a Phosphothreonine. Lys120 is covalently cross-linked (Glycyl lysine isopeptide (Lys-Gly) (interchain with G-Cter in SUMO2)). Lys136 is subject to N6-acetyllysine. Positions 176–199 (GWKPGSDTIKPDVQKSKEYFSKQK) are disordered. Residues 184–199 (IKPDVQKSKEYFSKQK) are compositionally biased toward basic and acidic residues. A Glycyl lysine isopeptide (Lys-Gly) (interchain with G-Cter in SUMO1) cross-link involves residue Lys185. The residue at position 197 (Lys197) is an N6-acetyllysine.

Belongs to the peroxiredoxin family. AhpC/Prx1 subfamily. In terms of assembly, homodimer; disulfide-linked, upon oxidation. 5 homodimers assemble to form a ring-like decamer. Interacts with GDPD5; forms a mixed-disulfide with GDPD5. Interacts with SESN1 and SESN2. Interacts with FAM107A. In terms of processing, phosphorylated on Thr-90 during the M-phase, which leads to a decrease in enzymatic activity. Acetylation increases reducing activity and resistance to superoxidation. Deacetylated by HDAC6 which decreases reducing activity.

It is found in the cytoplasm. It carries out the reaction a hydroperoxide + [thioredoxin]-dithiol = an alcohol + [thioredoxin]-disulfide + H2O. Thiol-specific peroxidase that catalyzes the reduction of hydrogen peroxide and organic hydroperoxides to water and alcohols, respectively. Plays a role in cell protection against oxidative stress by detoxifying peroxides and as sensor of hydrogen peroxide-mediated signaling events. Might participate in the signaling cascades of growth factors and tumor necrosis factor-alpha by regulating the intracellular concentrations of H(2)O(2). Reduces an intramolecular disulfide bond in GDPD5 that gates the ability to GDPD5 to drive postmitotic motor neuron differentiation. This is Peroxiredoxin-1 (PRDX1) from Cricetulus griseus (Chinese hamster).